A 394-amino-acid polypeptide reads, in one-letter code: Elongation factor Tu (394 aa).

The 195-residue stretch at 10–204 (LPHVNIGTIG…AVDEYIPTPT (195 aa)) folds into the tr-type G domain. The segment at 19-26 (GHVDHGKT) is G1. 19-26 (GHVDHGKT) lines the GTP pocket. Thr-26 is a Mg(2+) binding site. Residues 60–64 (GITIN) form a G2 region. The G3 stretch occupies residues 81–84 (DCPG). GTP is bound by residues 81 to 85 (DCPGH) and 136 to 139 (NKCD). Residues 136 to 139 (NKCD) form a G4 region. A G5 region spans residues 174–176 (SAL).

It belongs to the TRAFAC class translation factor GTPase superfamily. Classic translation factor GTPase family. EF-Tu/EF-1A subfamily. Monomer.

Its subcellular location is the cytoplasm. The catalysed reaction is GTP + H2O = GDP + phosphate + H(+). GTP hydrolase that promotes the GTP-dependent binding of aminoacyl-tRNA to the A-site of ribosomes during protein biosynthesis. In Mesoplasma florum (strain ATCC 33453 / NBRC 100688 / NCTC 11704 / L1) (Acholeplasma florum), this protein is Elongation factor Tu.